We begin with the raw amino-acid sequence, 226 residues long: Leucyl/phenylalanyl-tRNA--protein transferase (226 aa).

It belongs to the L/F-transferase family.

The protein resides in the cytoplasm. The catalysed reaction is N-terminal L-lysyl-[protein] + L-leucyl-tRNA(Leu) = N-terminal L-leucyl-L-lysyl-[protein] + tRNA(Leu) + H(+). The enzyme catalyses N-terminal L-arginyl-[protein] + L-leucyl-tRNA(Leu) = N-terminal L-leucyl-L-arginyl-[protein] + tRNA(Leu) + H(+). It carries out the reaction L-phenylalanyl-tRNA(Phe) + an N-terminal L-alpha-aminoacyl-[protein] = an N-terminal L-phenylalanyl-L-alpha-aminoacyl-[protein] + tRNA(Phe). Its function is as follows. Functions in the N-end rule pathway of protein degradation where it conjugates Leu, Phe and, less efficiently, Met from aminoacyl-tRNAs to the N-termini of proteins containing an N-terminal arginine or lysine. This is Leucyl/phenylalanyl-tRNA--protein transferase from Azotobacter vinelandii (strain DJ / ATCC BAA-1303).